We begin with the raw amino-acid sequence, 432 residues long: Phosphomethylpyrimidine synthase (432 aa).

Substrate contacts are provided by residues Asn-69, Met-98, Tyr-127, His-163, 185 to 187, 226 to 229, and Glu-265; these read SRG and DACR. His-269 is a binding site for Zn(2+). Residue Tyr-292 participates in substrate binding. His-333 lines the Zn(2+) pocket. Cys-409, Cys-412, and Cys-416 together coordinate [4Fe-4S] cluster.

This sequence belongs to the ThiC family. It depends on [4Fe-4S] cluster as a cofactor.

The catalysed reaction is 5-amino-1-(5-phospho-beta-D-ribosyl)imidazole + S-adenosyl-L-methionine = 4-amino-2-methyl-5-(phosphooxymethyl)pyrimidine + CO + 5'-deoxyadenosine + formate + L-methionine + 3 H(+). It functions in the pathway cofactor biosynthesis; thiamine diphosphate biosynthesis. In terms of biological role, catalyzes the synthesis of the hydroxymethylpyrimidine phosphate (HMP-P) moiety of thiamine from aminoimidazole ribotide (AIR) in a radical S-adenosyl-L-methionine (SAM)-dependent reaction. The protein is Phosphomethylpyrimidine synthase of Pelotomaculum thermopropionicum (strain DSM 13744 / JCM 10971 / SI).